A 228-amino-acid chain; its full sequence is Phosphoglycolate phosphatase (228 aa).

Asp-12 (nucleophile) is an active-site residue. 3 residues coordinate Mg(2+): Asp-12, Asp-14, and Asp-177.

The protein belongs to the HAD-like hydrolase superfamily. CbbY/CbbZ/Gph/YieH family. Requires Mg(2+) as cofactor.

It catalyses the reaction 2-phosphoglycolate + H2O = glycolate + phosphate. It functions in the pathway organic acid metabolism; glycolate biosynthesis; glycolate from 2-phosphoglycolate: step 1/1. In terms of biological role, specifically catalyzes the dephosphorylation of 2-phosphoglycolate. Is involved in the dissimilation of the intracellular 2-phosphoglycolate formed during the DNA repair of 3'-phosphoglycolate ends, a major class of DNA lesions induced by oxidative stress. This chain is Phosphoglycolate phosphatase, found in Vibrio vulnificus (strain YJ016).